The following is an 880-amino-acid chain: Phosphoinositide 3-kinase regulatory subunit 5 (880 aa).

Met1 is modified (N-acetylmethionine). Positions 25–101 (SLSRRSTSWS…TPHFPPDSDL (77 aa)) are heterodimerization. 4 disordered regions span residues 315-339 (GILG…TDGH), 389-416 (SGYV…GHRR), 454-510 (RRAG…SGDE), and 565-601 (HGTS…TPWE). The span at 318-335 (GDDEEEEEEEEEVEEDLE) shows a compositional bias: acidic residues. Ser458 and Ser507 each carry phosphoserine. Pro residues predominate over residues 571 to 585 (ACPPPRSQTPSPPTD). Residues 653-753 (PILADMLLYY…WSNLEKVCTS (101 aa)) are interaction with beta-gamma G protein dimers.

As to quaternary structure, heterodimer of a catalytic subunit (PIK3CG/p120) and a regulatory (PIK3R5a/p101) subunit. Interacts with beta-gamma G protein dimers. Ubiquitously expressed with high expression in fetal brain compared to adult brain. Abundant expression is observed in cerebellum, cerebral cortex, cerebral meninges, and vermis cerebelli.

It is found in the nucleus. The protein resides in the cytoplasm. Its subcellular location is the cell membrane. With respect to regulation, greatly activated by G gamma proteins. Its function is as follows. Regulatory subunit of the PI3K gamma complex. Required for recruitment of the catalytic subunit to the plasma membrane via interaction with beta-gamma G protein dimers. Required for G protein-mediated activation of PIK3CG. This Homo sapiens (Human) protein is Phosphoinositide 3-kinase regulatory subunit 5 (PIK3R5).